The chain runs to 408 residues: Succinylornithine transaminase (408 aa).

At Lys252 the chain carries N6-(pyridoxal phosphate)lysine.

Belongs to the class-III pyridoxal-phosphate-dependent aminotransferase family. AstC subfamily. The cofactor is pyridoxal 5'-phosphate.

It carries out the reaction N(2)-succinyl-L-ornithine + 2-oxoglutarate = N-succinyl-L-glutamate 5-semialdehyde + L-glutamate. Its pathway is amino-acid degradation; L-arginine degradation via AST pathway; L-glutamate and succinate from L-arginine: step 3/5. In terms of biological role, catalyzes the transamination of N(2)-succinylornithine and alpha-ketoglutarate into N(2)-succinylglutamate semialdehyde and glutamate. Can also act as an acetylornithine aminotransferase. This Salmonella paratyphi B (strain ATCC BAA-1250 / SPB7) protein is Succinylornithine transaminase.